Reading from the N-terminus, the 568-residue chain is Urease subunit alpha (568 aa).

One can recognise a Urease domain in the interval 130–568 (GGIDTHIHFI…LPMAQRYFLF (439 aa)). Ni(2+) contacts are provided by histidine 135, histidine 137, and lysine 218. Lysine 218 bears the N6-carboxylysine mark. Histidine 220 provides a ligand contact to substrate. Ni(2+) contacts are provided by histidine 247 and histidine 273. Catalysis depends on histidine 321, which acts as the Proton donor. Aspartate 361 provides a ligand contact to Ni(2+).

Belongs to the metallo-dependent hydrolases superfamily. Urease alpha subunit family. As to quaternary structure, heterotrimer of UreA (gamma), UreB (beta) and UreC (alpha) subunits. Three heterotrimers associate to form the active enzyme. Ni cation is required as a cofactor. Post-translationally, carboxylation allows a single lysine to coordinate two nickel ions.

Its subcellular location is the cytoplasm. It catalyses the reaction urea + 2 H2O + H(+) = hydrogencarbonate + 2 NH4(+). It functions in the pathway nitrogen metabolism; urea degradation; CO(2) and NH(3) from urea (urease route): step 1/1. In Burkholderia pseudomallei (strain K96243), this protein is Urease subunit alpha.